Reading from the N-terminus, the 391-residue chain is AN1-type zinc finger and UBX domain-containing protein DDB_G0268260 (391 aa).

A compositionally biased stretch (low complexity) spans 1–16 (MQQQSPPTAPQQQQQQ). The tract at residues 1 to 20 (MQQQSPPTAPQQQQQQQRER) is disordered. 2 AN1-type zinc fingers span residues 26-74 (DHIG…QREN) and 118-166 (APKS…IINS). Zn(2+)-binding residues include Cys32, Cys37, Cys47, Cys50, Cys55, His58, His64, Cys66, Cys124, Cys129, Cys139, Cys142, Cys147, His150, His156, and Cys158. Positions 185–236 (NINNNINNNKNNNNNNNNNNNNNNNNNNNNNNNNNNNNNNNNNNNNNSNNNN) are enriched in low complexity. The segment at 185 to 240 (NINNNINNNKNNNNNNNNNNNNNNNNNNNNNNNNNNNNNNNNNNNNNSNNNNKLIY) is disordered. The UBX domain maps to 278–356 (SSEEIGEIGI…GLLPVSTLYM (79 aa)).

This is AN1-type zinc finger and UBX domain-containing protein DDB_G0268260 from Dictyostelium discoideum (Social amoeba).